A 1058-amino-acid chain; its full sequence is Isoleucine--tRNA ligase (1058 aa).

The 'HIGH' region signature appears at 48-58 (PYTTGHIHLGT). The short motif at 596 to 600 (KMSKS) is the 'KMSKS' region element. Lysine 599 contacts ATP.

This sequence belongs to the class-I aminoacyl-tRNA synthetase family. IleS type 2 subfamily. Monomer. Zn(2+) serves as cofactor.

It localises to the cytoplasm. The enzyme catalyses tRNA(Ile) + L-isoleucine + ATP = L-isoleucyl-tRNA(Ile) + AMP + diphosphate. Functionally, catalyzes the attachment of isoleucine to tRNA(Ile). As IleRS can inadvertently accommodate and process structurally similar amino acids such as valine, to avoid such errors it has two additional distinct tRNA(Ile)-dependent editing activities. One activity is designated as 'pretransfer' editing and involves the hydrolysis of activated Val-AMP. The other activity is designated 'posttransfer' editing and involves deacylation of mischarged Val-tRNA(Ile). This is Isoleucine--tRNA ligase from Methanosarcina acetivorans (strain ATCC 35395 / DSM 2834 / JCM 12185 / C2A).